A 411-amino-acid chain; its full sequence is Translation initiation factor 2 subunit gamma (411 aa).

The tr-type G domain occupies 9 to 201 (QPSVNIGMVG…AIEKYIPSPK (193 aa)). Positions 18-25 (GHVDHGKS) are G1. Positions 21, 25, 46, and 48 each coordinate Mg(2+). Residue 21-26 (DHGKST) coordinates GTP. The interval 46-50 (GISIK) is G2. Residues 88 to 91 (DAPG) are G3. Residues 144–147 (NKID) and 179–181 (SAY) contribute to the GTP site. A G4 region spans residues 144-147 (NKID). A G5 region spans residues 179-181 (SAY).

It belongs to the TRAFAC class translation factor GTPase superfamily. Classic translation factor GTPase family. EIF2G subfamily. As to quaternary structure, heterotrimer composed of an alpha, a beta and a gamma chain. The cofactor is Mg(2+).

It carries out the reaction GTP + H2O = GDP + phosphate + H(+). In terms of biological role, eIF-2 functions in the early steps of protein synthesis by forming a ternary complex with GTP and initiator tRNA. The chain is Translation initiation factor 2 subunit gamma from Thermoplasma acidophilum (strain ATCC 25905 / DSM 1728 / JCM 9062 / NBRC 15155 / AMRC-C165).